We begin with the raw amino-acid sequence, 634 residues long: Kelch-like protein 31 (634 aa).

At Ala-2 the chain carries N,N,N-trimethylalanine. Residues 73–137 form the BTB domain; sequence CDLVIGTKTK…AYTGKLTLSL (65 aa). One can recognise a BACK domain in the interval 172–273; that stretch reads CMYVVNIAET…SAQDLVNYVQ (102 aa). Kelch repeat units lie at residues 317–365, 366–419, 420–466, 468–513, 515–565, and 567–614; these read VLVT…VMDG, FLYV…VFNG, LVYA…VADG, VLVT…TLSD, VYVM…ALHG, and AYLV…TLSM.

Post-translationally, N-terminus is methylated by METTL11A/NTM1. As to expression, strongly expressed in skeletal muscle and weakly in heart. According to PubMed:15302408, not expressed in other tissues. According to PubMed:18719355, abundantly expressed in both embryonic skeletal and heart tissues.

Its function is as follows. Transcriptional repressor in MAPK/JNK signaling pathway to regulate cellular functions. Overexpression inhibits the transcriptional activities of both the TPA-response element (TRE) and serum response element (SRE). The protein is Kelch-like protein 31 (KLHL31) of Homo sapiens (Human).